Here is a 437-residue protein sequence, read N- to C-terminus: GTPase Obg (437 aa).

Residues 2 to 160 enclose the Obg domain; it reads SMFLDTAKIS…RQLELELKIL (159 aa). Residues 161-338 enclose the OBG-type G domain; that stretch reads ADVGLVGFPS…LLEATAELLA (178 aa). Residues 167 to 174, 192 to 196, 214 to 217, 284 to 287, and 319 to 321 contribute to the GTP site; these read GFPSVGKS, FTTIV, DLPG, NKMD, and SSL. 2 residues coordinate Mg(2+): serine 174 and threonine 194. Residues 359–437 form the OCT domain; that stretch reads GFAETEKDFE…IGKFEFEFVD (79 aa).

Belongs to the TRAFAC class OBG-HflX-like GTPase superfamily. OBG GTPase family. Monomer. Mg(2+) serves as cofactor.

The protein localises to the cytoplasm. Functionally, an essential GTPase which binds GTP, GDP and possibly (p)ppGpp with moderate affinity, with high nucleotide exchange rates and a fairly low GTP hydrolysis rate. Plays a role in control of the cell cycle, stress response, ribosome biogenesis and in those bacteria that undergo differentiation, in morphogenesis control. This chain is GTPase Obg, found in Streptococcus pyogenes serotype M4 (strain MGAS10750).